Consider the following 204-residue polypeptide: dITP/XTP pyrophosphatase (204 aa).

Position 8–13 (8–13 (SRNRKK)) interacts with substrate. Residue D73 is the Proton acceptor of the active site. Residue D73 coordinates Mg(2+). Substrate contacts are provided by residues S74, 155–158 (FGYD), K179, and 184–185 (HR).

It belongs to the HAM1 NTPase family. Homodimer. The cofactor is Mg(2+).

The catalysed reaction is XTP + H2O = XMP + diphosphate + H(+). The enzyme catalyses dITP + H2O = dIMP + diphosphate + H(+). It catalyses the reaction ITP + H2O = IMP + diphosphate + H(+). Functionally, pyrophosphatase that catalyzes the hydrolysis of nucleoside triphosphates to their monophosphate derivatives, with a high preference for the non-canonical purine nucleotides XTP (xanthosine triphosphate), dITP (deoxyinosine triphosphate) and ITP. Seems to function as a house-cleaning enzyme that removes non-canonical purine nucleotides from the nucleotide pool, thus preventing their incorporation into DNA/RNA and avoiding chromosomal lesions. The sequence is that of dITP/XTP pyrophosphatase from Mycolicibacterium paratuberculosis (strain ATCC BAA-968 / K-10) (Mycobacterium paratuberculosis).